Reading from the N-terminus, the 150-residue chain is Transcriptional repressor NrdR (150 aa).

Positions 1 to 22 (MKCPYCSAPDSRVVNSRPSDDG) are disordered. A zinc finger lies at 3-34 (CPYCSAPDSRVVNSRPSDDGASIRRRRECLRC). The 88-residue stretch at 49-136 (LMVLKRGGQR…VYRDFDSLER (88 aa)) folds into the ATP-cone domain.

It belongs to the NrdR family. It depends on Zn(2+) as a cofactor.

Its function is as follows. Negatively regulates transcription of bacterial ribonucleotide reductase nrd genes and operons by binding to NrdR-boxes. The polypeptide is Transcriptional repressor NrdR (Deinococcus geothermalis (strain DSM 11300 / CIP 105573 / AG-3a)).